The chain runs to 496 residues: Beta-amylase (496 aa).

Positions 54, 94, and 102 each coordinate substrate. The active-site Proton donor is the Glu187. Substrate contacts are provided by Lys296, His301, and Thr343. The Proton acceptor role is filled by Glu381. Substrate is bound by residues Asn382 to Ala383 and Arg421.

The protein belongs to the glycosyl hydrolase 14 family.

It carries out the reaction Hydrolysis of (1-&gt;4)-alpha-D-glucosidic linkages in polysaccharides so as to remove successive maltose units from the non-reducing ends of the chains.. This is Beta-amylase (BMY1) from Vigna unguiculata (Cowpea).